The sequence spans 558 residues: Atlastin-1 (558 aa).

The disordered stretch occupies residues 1-29 (MAKSRRDRNSWGGFSEKSSDWSSEEEEPV). The segment at 1–34 (MAKSRRDRNSWGGFSEKSSDWSSEEEEPVRKAGP) is N-terminal hypervariable region (HVR). Over 1–449 (MAKSRRDRNS…NIFHAARTPA (449 aa)) the chain is Cytoplasmic. Ser10, Ser22, and Ser23 each carry phosphoserine. Positions 64–309 (DKEVVAVSVA…LIPWLLSPES (246 aa)) constitute a GB1/RHD3-type G domain. Arg77, Lys78, Gly79, Lys80, Ser81, Phe82, Gln148, Arg217, Asp218, Val276, and Asn279 together coordinate GDP. Arg77, Lys78, Gly79, Lys80, Ser81, and Phe82 together coordinate GTP. Ser81 is a Mg(2+) binding site. Residues Arg217, Asp218, and Val276 each contribute to the GTP site. Positions 347-438 (MLQATAEANN…YIQYIKHNDS (92 aa)) are 3HB (three-helix bundle) domain. Lys395 bears the N6-acetyllysine mark. Residues 412-439 (EFSRRYLQQLESEIDELYIQYIKHNDSK) adopt a coiled-coil conformation. The interval 439–447 (KNIFHAART) is linker. Residues 450 to 470 (TLFVVIFITYVIAGVTGFIGL) form a helical membrane-spanning segment. Asp471 is a topological domain (lumenal). The helical transmembrane segment at 472–492 (IIASLCNMIMGLTLITLCTWA) threads the bilayer. The Cytoplasmic segment spans residues 493–558 (YIRYSGEYRE…PTEQPEKKKI (66 aa)). Positions 521-558 (NEALYKLYSAAATHRHLYQQAFPAPKSEPTEQPEKKKI) are autoinhibitory domain.

It belongs to the TRAFAC class dynamin-like GTPase superfamily. GB1/RHD3 GTPase family. GB1 subfamily. As to quaternary structure, monomeric and homodimeric. The homodimer, transiently formed by two molecules on opposing membranes, is the active form mediating ER membrane fusion. Interacts with REEP1, REEP5, RTN3 and RTN4 (via the transmembrane region); these proteins are involved in endoplasmic reticulum tubular network organization. Interacts with ZFYVE27; both proteins are involved in endoplasmic reticulum tubular network organization. Interacts with ARL6IP1; both proteins are involved in endoplasmic reticulum tubular network organization. Interacts with SPAST; the interaction is direct, could recruit SPAST to Golgi membranes. Interacts (via N-terminal region) with MAP4K4 (via CNH regulatory domain). May interact with TMED2. Interacts with CPT1C. Phosphorylated. Phosphorylation, by different kinases, of the N-terminal hypervariable region (HVR) regulates the ATL1-mediated membrane tethering step. In terms of tissue distribution, detected in brain where it is abundant in lamina V of the cerebral cortex. Also expressed within the hippocampus, mainly in pyramidal neurons in CA1 and CA3. Weakly expressed in the striatum and more robustly in amygdala and several thalamic nuclei. Also detected in several mesopontine nuclei (at protein level).

It localises to the endoplasmic reticulum membrane. The protein localises to the golgi apparatus membrane. It is found in the cell projection. The protein resides in the axon. The catalysed reaction is GTP + H2O = GDP + phosphate + H(+). Functionally, atlastin-1 (ATL1) is a membrane-anchored GTPase that mediates the GTP-dependent fusion of endoplasmic reticulum (ER) membranes, maintaining the continuous ER network. It facilitates the formation of three-way junctions where ER tubules intersect. Two atlastin-1 on neighboring ER tubules bind GTP and form loose homodimers through the GB1/RHD3-type G domains and 3HB regions. Upon GTP hydrolysis, the 3HB regions tighten, pulling the membranes together to drive their fusion. After fusion, the homodimer disassembles upon release of inorganic phosphate (Pi). Subsequently, GDP dissociates, resetting the monomers to a conformation ready for a new fusion cycle. May also regulate more or less directly Golgi biogenesis. Indirectly regulates axonal development. In Rattus norvegicus (Rat), this protein is Atlastin-1.